The following is a 363-amino-acid chain: Cyanuric acid amidohydrolase (363 aa).

The interval 1–104 (MYHIDVFRIP…TVFARRPAID (104 aa)) is RU A. Substrate contacts are provided by residues arginine 52 and 83–84 (SG). The segment at 112-249 (RLTLGIAFTR…NVVIAIGMSE (138 aa)) is RU B. The active site involves lysine 162. Substrate contacts are provided by residues arginine 194 and 232–233 (SA). The active-site Nucleophile is serine 232. An RU C region spans residues 255 to 363 (LVIAHGVMSD…GGPFAVIARA (109 aa)). Position 297 (glutamate 297) interacts with Mg(2+). Residues arginine 324 and 343–344 (SG) contribute to the substrate site. Residues alanine 346, glutamine 349, glycine 350, proline 351, and glycine 354 each coordinate Mg(2+).

It belongs to the cyclic amide hydrolase (CyAH) family. In terms of assembly, homotetramer.

It catalyses the reaction cyanurate + H2O = 1-carboxybiuret + H(+). It participates in xenobiotic degradation; atrazine degradation; biuret from cyanurate: step 1/1. With respect to regulation, inhibited by barbituric acid. Its function is as follows. Responsible for the hydrolysis of cyanuric acid, an intermediate formed during catabolism of s-triazine based compounds in herbicides such as atrazine and polymers such as melamine. Catalyzes the hydrolytic opening of the s-triazine ring of cyanuric acid (2,4,6-trihydroxy-s-triazine) to yield carbon dioxide and carboxybiuret, which spontaneously decarboxylates to biuret. In Pseudomonas sp. (strain ADP), this protein is Cyanuric acid amidohydrolase (atzD).